Consider the following 104-residue polypeptide: Precursor of CEP11 (104 aa).

Residues 1–27 (MAKTRRVIYLFLTIVLLFCELIDEAQG) form the signal peptide. Positions 28–85 (SRFRCHHSEDYSCKKRSSHHHHHHHHHQQQQHHHKDTPPEELQGSIKTRRSKDIYGLN) are excised as a propeptide. The tract at residues 37-104 (DYSCKKRSSH…SPGVGHLIKT (68 aa)) is disordered. Residues 41–62 (KKRSSHHHHHHHHHQQQQHHHK) show a composition bias toward basic residues. Proline 92 and proline 96 each carry hydroxyproline. Residues 101-104 (LIKT) constitute a propeptide that is removed on maturation.

This sequence belongs to the C-terminally encoded plant signaling peptide (CEP) family. In terms of assembly, interacts with CEP receptors (e.g. CEPR1 and CEPR2). The mature small signaling peptide is generated by proteolytic processing of the longer precursor. Expressed in lateral root primordia and in lateral roots excluding the meristem region.

Its subcellular location is the secreted. It localises to the extracellular space. It is found in the apoplast. Extracellular signaling peptide that may regulate primary root growth rate and systemic nitrogen (N)-demand signaling. Mediates up-regulation of genes involved in N uptake and assimilation pathways. This is Precursor of CEP11 from Arabidopsis thaliana (Mouse-ear cress).